The sequence spans 202 residues: Glycerol-3-phosphate acyltransferase (202 aa).

The next 6 helical transmembrane spans lie at 3-23 (NLII…LILT), 61-81 (IATI…LKFL), 87-107 (LLWS…YLLF), 117-137 (AGAM…VWAV), 144-164 (ISSL…FIFN), and 167-187 (LEIH…YKHL).

Belongs to the PlsY family. Probably interacts with PlsX.

It is found in the cell inner membrane. It catalyses the reaction an acyl phosphate + sn-glycerol 3-phosphate = a 1-acyl-sn-glycero-3-phosphate + phosphate. It participates in lipid metabolism; phospholipid metabolism. In terms of biological role, catalyzes the transfer of an acyl group from acyl-phosphate (acyl-PO(4)) to glycerol-3-phosphate (G3P) to form lysophosphatidic acid (LPA). This enzyme utilizes acyl-phosphate as fatty acyl donor, but not acyl-CoA or acyl-ACP. The polypeptide is Glycerol-3-phosphate acyltransferase (Campylobacter jejuni subsp. doylei (strain ATCC BAA-1458 / RM4099 / 269.97)).